A 125-amino-acid chain; its full sequence is Small ribosomal subunit protein uS13 (125 aa).

The tract at residues 95-125 (GLPVNGQRTRTNARTRKGGKKTVANKKKVTK) is disordered. The segment covering 105–125 (TNARTRKGGKKTVANKKKVTK) has biased composition (basic residues).

Belongs to the universal ribosomal protein uS13 family. As to quaternary structure, part of the 30S ribosomal subunit. Forms a loose heterodimer with protein S19. Forms two bridges to the 50S subunit in the 70S ribosome.

Functionally, located at the top of the head of the 30S subunit, it contacts several helices of the 16S rRNA. In the 70S ribosome it contacts the 23S rRNA (bridge B1a) and protein L5 of the 50S subunit (bridge B1b), connecting the 2 subunits; these bridges are implicated in subunit movement. Contacts the tRNAs in the A and P-sites. In Leptospira interrogans serogroup Icterohaemorrhagiae serovar copenhageni (strain Fiocruz L1-130), this protein is Small ribosomal subunit protein uS13.